The chain runs to 166 residues: Small ribosomal subunit protein uS5 (166 aa).

Positions 11-74 (LQEKLIAVNR…EKARRNMITV (64 aa)) constitute an S5 DRBM domain.

The protein belongs to the universal ribosomal protein uS5 family. As to quaternary structure, part of the 30S ribosomal subunit. Contacts proteins S4 and S8.

Functionally, with S4 and S12 plays an important role in translational accuracy. Its function is as follows. Located at the back of the 30S subunit body where it stabilizes the conformation of the head with respect to the body. The protein is Small ribosomal subunit protein uS5 of Histophilus somni (strain 2336) (Haemophilus somnus).